We begin with the raw amino-acid sequence, 415 residues long: Dihydroorotase (415 aa).

The Zn(2+) site is built by His-54 and His-56. Residues 56-58 (HFR) and Asn-88 each bind substrate. Zn(2+) is bound by residues Lys-136, His-169, His-217, and Asp-278. N6-carboxylysine is present on Lys-136. Asp-278 is a catalytic residue. Residue His-282 participates in substrate binding.

This sequence belongs to the metallo-dependent hydrolases superfamily. DHOase family. Class I DHOase subfamily. Zn(2+) is required as a cofactor.

The enzyme catalyses (S)-dihydroorotate + H2O = N-carbamoyl-L-aspartate + H(+). It functions in the pathway pyrimidine metabolism; UMP biosynthesis via de novo pathway; (S)-dihydroorotate from bicarbonate: step 3/3. In terms of biological role, catalyzes the reversible cyclization of carbamoyl aspartate to dihydroorotate. In Thermoplasma volcanium (strain ATCC 51530 / DSM 4299 / JCM 9571 / NBRC 15438 / GSS1), this protein is Dihydroorotase.